Here is a 281-residue protein sequence, read N- to C-terminus: Beta-lactamase (281 aa).

A signal peptide spans 1–24 (MKKLIFLIVIALVLSACNSNSSHA). The active-site Acyl-ester intermediate is the Ser-63. 225-227 (KSG) lines the substrate pocket.

Belongs to the class-A beta-lactamase family.

It carries out the reaction a beta-lactam + H2O = a substituted beta-amino acid. The protein is Beta-lactamase (blaZ) of Staphylococcus aureus.